The following is a 288-amino-acid chain: Protein RepA (288 aa).

The protein belongs to the initiator RepB protein family.

In terms of biological role, this protein is essential for plasmid replication; it is involved in copy control functions. This is Protein RepA (repA) from Escherichia coli.